The sequence spans 391 residues: Probable acridone synthase 3 (391 aa).

Cysteine 164 is an active-site residue.

This sequence belongs to the thiolase-like superfamily. Chalcone/stilbene synthases family.

The enzyme catalyses N-methylanthraniloyl-CoA + 3 malonyl-CoA + 3 H(+) = 1,3-dihydroxy-N-methylacridone + 3 CO2 + 4 CoA + H2O. This chain is Probable acridone synthase 3 (ACS3), found in Ruta graveolens (Common rue).